A 429-amino-acid chain; its full sequence is Enolase (429 aa).

Q163 lines the (2R)-2-phosphoglycerate pocket. Catalysis depends on E205, which acts as the Proton donor. 3 residues coordinate Mg(2+): D242, E285, and D312. (2R)-2-phosphoglycerate is bound by residues K337, R366, S367, and K388. K337 functions as the Proton acceptor in the catalytic mechanism.

The protein belongs to the enolase family. It depends on Mg(2+) as a cofactor.

Its subcellular location is the cytoplasm. The protein localises to the secreted. The protein resides in the cell surface. It carries out the reaction (2R)-2-phosphoglycerate = phosphoenolpyruvate + H2O. Its pathway is carbohydrate degradation; glycolysis; pyruvate from D-glyceraldehyde 3-phosphate: step 4/5. Its function is as follows. Catalyzes the reversible conversion of 2-phosphoglycerate (2-PG) into phosphoenolpyruvate (PEP). It is essential for the degradation of carbohydrates via glycolysis. The polypeptide is Enolase (Aromatoleum aromaticum (strain DSM 19018 / LMG 30748 / EbN1) (Azoarcus sp. (strain EbN1))).